The following is a 122-amino-acid chain: Large ribosomal subunit protein uL14c (122 aa).

This sequence belongs to the universal ribosomal protein uL14 family. As to quaternary structure, part of the 50S ribosomal subunit.

Its subcellular location is the plastid. The protein resides in the chloroplast. In terms of biological role, binds to 23S rRNA. The polypeptide is Large ribosomal subunit protein uL14c (Populus alba (White poplar)).